A 68-amino-acid chain; its full sequence is Protein SlyX homolog (68 aa).

This sequence belongs to the SlyX family.

This chain is Protein SlyX homolog, found in Pseudomonas entomophila (strain L48).